Reading from the N-terminus, the 330-residue chain is MEGAPLGPLALRLLLFVALPASGWLTTGAPEPPPLSGAPQDGIRINVTTLKDDGDISKQQVVLNITYESGQVYVNDLPVNSGVTRISCQTLIVKNENLENLEEKEYFGIVSVRILVHEWPMTSGSSLQLIVIQEEVVEIDGKQVQQKDVTEIDILVKNWGVLRHSNYTLPLEESMLHSISRDSDILFTLPNLSKKESVSSLQTTSQYLIRNVETTVDEDVLPGKLPETPLRAEPPSSYKVMCQWMEKFRKDLCRFWSSVFPVFFQFLNIMVVGITGAAVVITILKVLFPVSEYKGILQLDKVDVIPVTAINLYPDGPEKTAENLEDKTCI.

The signal sequence occupies residues 1–23 (MEGAPLGPLALRLLLFVALPASG). Over 24-268 (WLTTGAPEPP…VFPVFFQFLN (245 aa)) the chain is Extracellular. N-linked (GlcNAc...) asparagine glycans are attached at residues N46, N64, N166, and N191. A helical membrane pass occupies residues 269–289 (IMVVGITGAAVVITILKVLFP). Residues 290–330 (VSEYKGILQLDKVDVIPVTAINLYPDGPEKTAENLEDKTCI) are Cytoplasmic-facing.

The protein localises to the membrane. The polypeptide is Glycoprotein integral membrane protein 1 (GINM1) (Pongo abelii (Sumatran orangutan)).